The primary structure comprises 356 residues: tRNA-specific 2-thiouridylase MnmA 2 (356 aa).

Residues 8–15 (GMSGGVDS) and Met-34 contribute to the ATP site. Cys-103 (nucleophile) is an active-site residue. An intrachain disulfide couples Cys-103 to Cys-199. Gly-127 contributes to the ATP binding site. The interval 149–151 (KDQ) is interaction with tRNA. Residue Cys-199 is the Cysteine persulfide intermediate of the active site. An interaction with tRNA region spans residues 305–306 (RY).

It belongs to the MnmA/TRMU family.

It localises to the cytoplasm. It catalyses the reaction S-sulfanyl-L-cysteinyl-[protein] + uridine(34) in tRNA + AH2 + ATP = 2-thiouridine(34) in tRNA + L-cysteinyl-[protein] + A + AMP + diphosphate + H(+). In terms of biological role, catalyzes the 2-thiolation of uridine at the wobble position (U34) of tRNA, leading to the formation of s(2)U34. The chain is tRNA-specific 2-thiouridylase MnmA 2 from Clostridium botulinum (strain Okra / Type B1).